The sequence spans 503 residues: AMP phosphorylase (503 aa).

Residues Gly-168, 194-199 (SRAITG), and Ser-203 contribute to the AMP site. Asp-256 functions as the Proton donor in the catalytic mechanism. Positions 264 and 288 each coordinate AMP.

The protein belongs to the thymidine/pyrimidine-nucleoside phosphorylase family. Type 2 subfamily.

It carries out the reaction AMP + phosphate = alpha-D-ribose 1,5-bisphosphate + adenine. The enzyme catalyses CMP + phosphate = cytosine + alpha-D-ribose 1,5-bisphosphate. It catalyses the reaction UMP + phosphate = alpha-D-ribose 1,5-bisphosphate + uracil. In terms of biological role, catalyzes the conversion of AMP and phosphate to adenine and ribose 1,5-bisphosphate (R15P). Exhibits phosphorylase activity toward CMP and UMP in addition to AMP. Functions in an archaeal AMP degradation pathway, together with R15P isomerase and RubisCO. This is AMP phosphorylase from Methanocella arvoryzae (strain DSM 22066 / NBRC 105507 / MRE50).